A 1028-amino-acid polypeptide reads, in one-letter code: Pro-apoptotic serine protease NMA111 (1028 aa).

Over residues 1–10 the composition is skewed to basic residues; that stretch reads MEMSSKRKHS. A disordered region spans residues 1-39; sequence MEMSSKRKHSSGPISLRSTKHLRSDTAASPQPLTPDDQT. The interval 85-269 is serine protease; it reads VVSIHFCQTA…AATDYFLPLD (185 aa). Residues His123, Asp154, and Ser236 each act as charge relay system in the active site. 2 consecutive PDZ domains span residues 292-377 and 878-959; these read QWII…LLVQ and IFCG…VTFD. The interval 1003–1028 is disordered; the sequence is SDNLNADAMDEGRDDGISDMEPDGEK. A compositionally biased stretch (acidic residues) spans 1019-1028; sequence ISDMEPDGEK.

It belongs to the peptidase S1C family.

It is found in the nucleus. Functionally, nuclear serine protease which mediates apoptosis. This Ajellomyces capsulatus (strain NAm1 / WU24) (Darling's disease fungus) protein is Pro-apoptotic serine protease NMA111 (NMA111).